A 330-amino-acid chain; its full sequence is Low-redox potential peroxidase (330 aa).

An N-terminal signal peptide occupies residues 1 to 24 (MRSSTHIFVSFVVYCGVFVTSAIA). The N-linked (GlcNAc...) asparagine glycan is linked to Asn-27. Cystine bridges form between Cys-34–Cys-285, Cys-54–Cys-123, and Cys-251–Cys-314. Ca(2+) contacts are provided by Gly-69, Asp-71, and Ser-73. His-178 is a heme b binding site. Ca(2+) is bound by residues Ser-179, Asp-196, Thr-198, and Asp-203.

Belongs to the peroxidase family. Ligninase subfamily. Ca(2+) is required as a cofactor. It depends on heme b as a cofactor.

The protein resides in the secreted. It carries out the reaction 2 a phenolic donor + H2O2 = 2 a phenolic radical donor + 2 H2O. In terms of biological role, can oxidize the lignin redox mediator veratryl alcohol to veratryl aldehyde. May be involved in oxidation of lignocellulose substrates. The sequence is that of Low-redox potential peroxidase (LnP) from Taiwanofungus camphoratus (Poroid brown-rot fungus).